A 1876-amino-acid polypeptide reads, in one-letter code: Phenolphthiocerol/phthiocerol polyketide synthase subunit A (1876 aa).

Residues 9–83 (ADLRHWLIDY…ALAAYLAAPE (75 aa)) enclose the Carrier 1 domain. Position 43 is an O-(pantetheine 4'-phosphoryl)serine (S43). One can recognise a Ketosynthase family 3 (KS3) domain in the interval 101 to 526 (DEPIAVVGMG…GTNAHVVIEQ (426 aa)). Residues C273, H408, and H448 each act as for beta-ketoacyl synthase activity in the active site. Residues 626–950 (SPGPGTVFVY…NLNKAHTIHP (325 aa)) form an acyltransferase region. S720 functions as the For malonyltransferase activity in the catalytic mechanism. Positions 997-1112 (HTTVATVSAS…AQLSSSPSDS (116 aa)) are N-terminal hotdog fold. One can recognise a PKS/mFAS DH domain in the interval 997-1267 (HTTVATVSAS…YRALDFGLDV (271 aa)). H1027 (proton acceptor; for dehydratase activity) is an active-site residue. Residues 1102-1130 (TAQLSSSPSDSASSLNEHHRANGQPPERA) form a disordered region. Low complexity predominate over residues 1106-1115 (SSSPSDSASS). The segment at 1130-1267 (AHRDLIPDLA…YRALDFGLDV (138 aa)) is C-terminal hotdog fold. D1186 functions as the Proton donor; for dehydratase activity in the catalytic mechanism. 1491–1551 (AAYLITGGLG…RRRIDAIRAL (61 aa)) is an NADP(+) binding site. Positions 1491–1728 (AAYLITGGLG…DGYDVAQAVV (238 aa)) are beta-ketoacyl reductase. The Carrier 2 domain maps to 1759–1836 (EVRSELEQGL…SLASYLAKRV (78 aa)). At S1796 the chain carries O-(pantetheine 4'-phosphoryl)serine.

NADP(+) serves as cofactor. Pantetheine 4'-phosphate is required as a cofactor.

It carries out the reaction icosanoyl-[(phenol)carboxyphthiodiolenone synthase] + 2 (S)-methylmalonyl-CoA + 3 malonyl-CoA + 5 NADPH + 10 H(+) = C32-carboxyphthiodiolenone-[(phenol)carboxyphthiodiolenone synthase] + 5 CO2 + 5 NADP(+) + 5 CoA + 2 H2O. The enzyme catalyses docosanoyl-[(phenol)carboxyphthiodiolenone synthase] + 2 (S)-methylmalonyl-CoA + 3 malonyl-CoA + 5 NADPH + 10 H(+) = C34-carboxyphthiodiolenone-[(phenol)carboxyphthiodiolenone synthase] + 5 CO2 + 5 NADP(+) + 5 CoA + 2 H2O. The catalysed reaction is 17-(4-hydroxyphenyl)heptadecanoyl-[(phenol)carboxyphthiodiolenone synthase] + 2 (S)-methylmalonyl-CoA + 3 malonyl-CoA + 5 NADPH + 10 H(+) = C35-(phenol)carboxyphthiodiolenone-[(phenol)carboxyphthiodiolenone synthase] + 5 CO2 + 5 NADP(+) + 5 CoA + 2 H2O. It catalyses the reaction 19-(4-hydroxyphenyl)nonadecanoyl-[(phenol)carboxyphthiodiolenone synthase] + 2 (S)-methylmalonyl-CoA + 3 malonyl-CoA + 5 NADPH + 10 H(+) = C37-(phenol)carboxyphthiodiolenone-[(phenol)carboxyphthiodiolenone synthase] + 5 CO2 + 5 NADP(+) + 5 CoA + 2 H2O. It participates in lipid metabolism; fatty acid biosynthesis. In terms of biological role, part of the PpsABCDE complex involved in the biosynthesis of the lipid core common to phthiocerols and phenolphthiocerols by successive additions of malonyl-CoA or methylmalonyl-CoA extender units. PpsA can accept as substrate the activated forms of either icosanoyl (C20), docosanoyl (C22) or lignoceroyl (C24) groups from FadD26, or a (4-hydroxyphenyl)-C17 or (4-hydroxyphenyl)-C19 fatty acyl from FadD29. PpsA initiates the biosynthesis and extends its substrate using a malonyl-CoA extender unit. The PpsB and PpsC proteins add the second and third malonyl-CoA extender units. PpsD adds an (R)-methylmalonyl unit and PpsE adds a second (R)-methylmalonyl unit. The incorporation of the methylmalonyl units results in formation of two branched methyl groups in the elongated product. The chain is Phenolphthiocerol/phthiocerol polyketide synthase subunit A (ppsA) from Mycobacterium tuberculosis (strain CDC 1551 / Oshkosh).